A 136-amino-acid polypeptide reads, in one-letter code: Large ribosomal subunit protein uL16 (136 aa).

The protein belongs to the universal ribosomal protein uL16 family. Part of the 50S ribosomal subunit.

Binds 23S rRNA and is also seen to make contacts with the A and possibly P site tRNAs. The chain is Large ribosomal subunit protein uL16 from Alteromonas mediterranea (strain DSM 17117 / CIP 110805 / LMG 28347 / Deep ecotype).